The chain runs to 406 residues: Phosphopentomutase (406 aa).

The Mn(2+) site is built by Asp10, Asp305, His310, Asp346, His347, and His358.

This sequence belongs to the phosphopentomutase family. It depends on Mn(2+) as a cofactor.

The protein resides in the cytoplasm. It catalyses the reaction 2-deoxy-alpha-D-ribose 1-phosphate = 2-deoxy-D-ribose 5-phosphate. It carries out the reaction alpha-D-ribose 1-phosphate = D-ribose 5-phosphate. The protein operates within carbohydrate degradation; 2-deoxy-D-ribose 1-phosphate degradation; D-glyceraldehyde 3-phosphate and acetaldehyde from 2-deoxy-alpha-D-ribose 1-phosphate: step 1/2. Functionally, isomerase that catalyzes the conversion of deoxy-ribose 1-phosphate (dRib-1-P) and ribose 1-phosphate (Rib-1-P) to deoxy-ribose 5-phosphate (dRib-5-P) and ribose 5-phosphate (Rib-5-P), respectively. In Sinorhizobium medicae (strain WSM419) (Ensifer medicae), this protein is Phosphopentomutase.